A 240-amino-acid chain; its full sequence is Methylthioribulose-1-phosphate dehydratase (240 aa).

The segment covering Met-1–Ser-17 has biased composition (polar residues). Residues Met-1–Glu-20 are disordered. Residue Cys-100 participates in substrate binding. Positions 117 and 119 each coordinate Zn(2+). Glu-146 acts as the Proton donor/acceptor in catalysis. His-202 contributes to the Zn(2+) binding site.

Belongs to the aldolase class II family. MtnB subfamily. It depends on Zn(2+) as a cofactor.

The protein resides in the cytoplasm. It carries out the reaction 5-(methylsulfanyl)-D-ribulose 1-phosphate = 5-methylsulfanyl-2,3-dioxopentyl phosphate + H2O. The protein operates within amino-acid biosynthesis; L-methionine biosynthesis via salvage pathway; L-methionine from S-methyl-5-thio-alpha-D-ribose 1-phosphate: step 2/6. In terms of biological role, catalyzes the dehydration of methylthioribulose-1-phosphate (MTRu-1-P) into 2,3-diketo-5-methylthiopentyl-1-phosphate (DK-MTP-1-P). The polypeptide is Methylthioribulose-1-phosphate dehydratase (Neosartorya fischeri (strain ATCC 1020 / DSM 3700 / CBS 544.65 / FGSC A1164 / JCM 1740 / NRRL 181 / WB 181) (Aspergillus fischerianus)).